The following is a 117-amino-acid chain: Large ribosomal subunit protein eL8 (117 aa).

This sequence belongs to the eukaryotic ribosomal protein eL8 family. Part of the 50S ribosomal subunit. Probably part of the RNase P complex.

It is found in the cytoplasm. Its function is as follows. Multifunctional RNA-binding protein that recognizes the K-turn motif in ribosomal RNA, the RNA component of RNase P, box H/ACA, box C/D and box C'/D' sRNAs. The chain is Large ribosomal subunit protein eL8 from Methanococcus aeolicus (strain ATCC BAA-1280 / DSM 17508 / OCM 812 / Nankai-3).